The sequence spans 706 residues: MEKTFNLTRRDDGIAILTMDVPGETMNTLKAQFGPEISEILAEIKSDPHIRGLVLISGKKDSFVAGADISMLDACKTAGDAKALSQQGHVVFNELEALKIPVVAAIHGACLGGGLELALACHQRVCSDDGKTMLGVPEVQLGLLPGGGGTQRLPRLVGITTALDMMLTGKQIRPKQALKMGLVNDVVPQTILLQTAVEMALAGKRAPKPIKKSLVNQVLEGTSFGRNIIFDQATKQVEKKTQGNYPAPAKIIDCVRQGIAKGMQKGLEVEASHFAELVVSKESEALRSIFFATTEMKKETGAEGATPRKVKKAVILGGGLMGGGIASVTTTKAKIPVRVKDISEKGLSNALAYAYKLLDKGVKRRHMTPAVRDNLMALMTTTTEYKGVKDADIVVEAVFEDLALKHQMVKDIERECGEHTIFASNTSSLPISQIAEAATRPENVIGLHYFSPVEKMPLVEVIAHAKTSPETIATTVAFARKQGKTPIVVQDGAGFYVNRILALYMNEAAQLLLEGQSVEHLDKALVKFGFPVGPITLLDEVGIDVGAKISPILDKELGERFKAPAAFDKLLGDDRKGRKNGKGFYQYGASSKKTKAVDETVYGVLGIKPSTNKDAKALAERCVVQMLNEAVRCLDEGIIASPRDGDIGAIFGIGFPPFLGGPFHYIDTLGAANLVKILEGYQSQFGNRFEPCERLKTMARENVSFF.

The segment at 1 to 188 (MEKTFNLTRR…KMGLVNDVVP (188 aa)) is enoyl-CoA hydratase. The segment at 308–706 (RKVKKAVILG…TMARENVSFF (399 aa)) is 3-hydroxyacyl-CoA dehydrogenase.

This sequence in the N-terminal section; belongs to the enoyl-CoA hydratase/isomerase family. The protein in the central section; belongs to the 3-hydroxyacyl-CoA dehydrogenase family. As to quaternary structure, heterotetramer of two alpha chains (FadJ) and two beta chains (FadI).

The protein localises to the cytoplasm. It carries out the reaction a (3S)-3-hydroxyacyl-CoA = a (2E)-enoyl-CoA + H2O. It catalyses the reaction a 4-saturated-(3S)-3-hydroxyacyl-CoA = a (3E)-enoyl-CoA + H2O. The catalysed reaction is a (3S)-3-hydroxyacyl-CoA + NAD(+) = a 3-oxoacyl-CoA + NADH + H(+). The enzyme catalyses (3S)-3-hydroxybutanoyl-CoA = (3R)-3-hydroxybutanoyl-CoA. The protein operates within lipid metabolism; fatty acid beta-oxidation. Its function is as follows. Catalyzes the formation of a hydroxyacyl-CoA by addition of water on enoyl-CoA. Also exhibits 3-hydroxyacyl-CoA epimerase and 3-hydroxyacyl-CoA dehydrogenase activities. The chain is Fatty acid oxidation complex subunit alpha from Shewanella putrefaciens (strain CN-32 / ATCC BAA-453).